A 36-amino-acid chain; its full sequence is Dermonecrotic toxin LgSicTox-beta-LOXN1/LOXN7 (36 aa).

This sequence belongs to the arthropod phospholipase D family. Class II subfamily. The cofactor is Mg(2+). In terms of processing, contains 2 disulfide bonds. Expressed by the venom gland.

The protein resides in the secreted. It carries out the reaction an N-(acyl)-sphingosylphosphocholine = an N-(acyl)-sphingosyl-1,3-cyclic phosphate + choline. The catalysed reaction is an N-(acyl)-sphingosylphosphoethanolamine = an N-(acyl)-sphingosyl-1,3-cyclic phosphate + ethanolamine. It catalyses the reaction a 1-acyl-sn-glycero-3-phosphocholine = a 1-acyl-sn-glycero-2,3-cyclic phosphate + choline. The enzyme catalyses a 1-acyl-sn-glycero-3-phosphoethanolamine = a 1-acyl-sn-glycero-2,3-cyclic phosphate + ethanolamine. In terms of biological role, dermonecrotic toxins cleave the phosphodiester linkage between the phosphate and headgroup of certain phospholipids (sphingolipid and lysolipid substrates), forming an alcohol (often choline) and a cyclic phosphate. This toxin acts on sphingomyelin (SM). It may also act on ceramide phosphoethanolamine (CPE), lysophosphatidylcholine (LPC) and lysophosphatidylethanolamine (LPE), but not on lysophosphatidylserine (LPS), and lysophosphatidylglycerol (LPG). It acts by transphosphatidylation, releasing exclusively cyclic phosphate products as second products. Induces dermonecrosis, hemolysis, increased vascular permeability, edema, inflammatory response, and platelet aggregation. This chain is Dermonecrotic toxin LgSicTox-beta-LOXN1/LOXN7, found in Loxosceles gaucho (Spider).